The sequence spans 122 residues: ATP-dependent Clp protease adapter protein ClpS (122 aa).

The tract at residues 1-27 (MVRMATKPPSMTPTPPTGAPPRDDGGS) is disordered. The segment covering 10–19 (SMTPTPPTGA) has biased composition (pro residues).

The protein belongs to the ClpS family. As to quaternary structure, binds to the N-terminal domain of the chaperone ClpA.

In terms of biological role, involved in the modulation of the specificity of the ClpAP-mediated ATP-dependent protein degradation. The sequence is that of ATP-dependent Clp protease adapter protein ClpS from Paracidovorax citrulli (strain AAC00-1) (Acidovorax citrulli).